We begin with the raw amino-acid sequence, 38 residues long: Histidine decarboxylase small chain (38 aa).

As to quaternary structure, heterohexamer of 3 large and 3 small chains. The cofactor is pyruvate.

It catalyses the reaction L-histidine + H(+) = histamine + CO2. This is Histidine decarboxylase small chain from Micrococcus sp.